A 782-amino-acid polypeptide reads, in one-letter code: Protein phosphatase 1 regulatory subunit 12C (782 aa).

Composition is skewed to low complexity over residues 1–19 and 77–88; these read MSGE…AAAA and DPGPGSGAASDP. Disordered stretches follow at residues 1–45 and 77–98; these read MSGE…GERR and DPGP…RAVL. Ser-2 is subject to N-acetylserine. ANK repeat units lie at residues 104–133, 137–166, 230–259, and 263–292; these read DGIS…TVNQ, EGWT…NIAA, TGAS…DTEL, and DGWT…GMDS. Positions 301-332 form a coiled coil; sequence CDLADEDVMNLLEELAQKQEDLRNQKEGSQGR. Positions 321-685 are disordered; that stretch reads DLRNQKEGSQ…HEEPDGGFRK (365 aa). Over residues 332-341 the composition is skewed to polar residues; sequence RGQESQVPSS. The segment covering 353–369 has biased composition (basic and acidic residues); it reads SSREKISLQDLSKERRP. Residues 401-413 are compositionally biased toward low complexity; sequence VSSPVSSNPKSPV. Phosphoserine occurs at positions 403, 411, 431, 454, and 509. Residues 451–465 show a composition bias toward polar residues; sequence RSASSSLLEKASTQA. Residues 537 to 546 are compositionally biased toward basic and acidic residues; it reads VRDEESESQR. The span at 547–557 shows a compositional bias: basic residues; the sequence is KARSRLMRQSR. Thr-560 carries the post-translational modification Phosphothreonine. The residue at position 647 (Ser-647) is a Phosphoserine. A compositionally biased stretch (basic and acidic residues) spans 664 to 685; sequence SQRDLVLESKQEHEEPDGGFRK. Residues 681-782 are a coiled coil; the sequence is GGFRKMYTEL…LIRVISKLSK (102 aa).

In terms of assembly, PP1 comprises a catalytic subunit, PPP1CA, PPP1CB or PPP1CC, and one or several targeting or regulatory subunits. PPP1R12C mediates binding to myosin. Interacts via its N-terminus with PPP1CB. Interacts with IL16. Interacts with the coiled-coil domain of MPRIP. Interacts with NOD2. In terms of processing, phosphorylation at Thr-560 is essential for its interaction with PPP1CB.

It localises to the cytoplasm. The protein resides in the cytoskeleton. It is found in the stress fiber. Functionally, regulates myosin phosphatase activity. The protein is Protein phosphatase 1 regulatory subunit 12C of Mus musculus (Mouse).